We begin with the raw amino-acid sequence, 380 residues long: Glutamyl-tRNA reductase 1 (380 aa).

Substrate contacts are provided by residues 42–45 (TCNR), S93, 98–100 (ETD), and Q104. C43 (nucleophile) is an active-site residue. NADP(+) is bound at residue 172 to 177 (GAGAVG).

The protein belongs to the glutamyl-tRNA reductase family. As to quaternary structure, homodimer.

The enzyme catalyses (S)-4-amino-5-oxopentanoate + tRNA(Glu) + NADP(+) = L-glutamyl-tRNA(Glu) + NADPH + H(+). It functions in the pathway porphyrin-containing compound metabolism; protoporphyrin-IX biosynthesis; 5-aminolevulinate from L-glutamyl-tRNA(Glu): step 1/2. Catalyzes the NADPH-dependent reduction of glutamyl-tRNA(Glu) to glutamate 1-semialdehyde (GSA). The chain is Glutamyl-tRNA reductase 1 from Pyrobaculum calidifontis (strain DSM 21063 / JCM 11548 / VA1).